A 446-amino-acid polypeptide reads, in one-letter code: Exodeoxyribonuclease 7 large subunit (446 aa).

The protein belongs to the XseA family. As to quaternary structure, heterooligomer composed of large and small subunits.

The protein resides in the cytoplasm. It catalyses the reaction Exonucleolytic cleavage in either 5'- to 3'- or 3'- to 5'-direction to yield nucleoside 5'-phosphates.. In terms of biological role, bidirectionally degrades single-stranded DNA into large acid-insoluble oligonucleotides, which are then degraded further into small acid-soluble oligonucleotides. This Streptococcus thermophilus (strain ATCC BAA-250 / LMG 18311) protein is Exodeoxyribonuclease 7 large subunit.